Here is a 64-residue protein sequence, read N- to C-terminus: Large ribosomal subunit protein uL29 (64 aa).

Belongs to the universal ribosomal protein uL29 family.

This is Large ribosomal subunit protein uL29 from Solidesulfovibrio magneticus (strain ATCC 700980 / DSM 13731 / RS-1) (Desulfovibrio magneticus).